The chain runs to 446 residues: NADH-ubiquinone oxidoreductase chain 4 (446 aa).

The next 13 helical transmembrane spans lie at 4 to 24 (IILF…YWMV), 56 to 76 (MLSY…LLAS), 93 to 113 (IVIL…FMFY), 114 to 134 (LFFE…GYQP), 141 to 161 (VYLL…IFYV), 182 to 202 (LLYF…LVHL), 212 to 232 (PVSG…YGLL), 245 to 265 (YSFV…LVCL), 272 to 292 (ALIA…LLTM), 297 to 317 (LCGS…LFCL), 330 to 350 (MLIN…WFLL), 373 to 393 (IVSW…FSAA), and 426 to 446 (LLHW…ILWL).

This sequence belongs to the complex I subunit 4 family.

The protein resides in the mitochondrion membrane. The catalysed reaction is a ubiquinone + NADH + 5 H(+)(in) = a ubiquinol + NAD(+) + 4 H(+)(out). Core subunit of the mitochondrial membrane respiratory chain NADH dehydrogenase (Complex I) that is believed to belong to the minimal assembly required for catalysis. Complex I functions in the transfer of electrons from NADH to the respiratory chain. The immediate electron acceptor for the enzyme is believed to be ubiquinone. The protein is NADH-ubiquinone oxidoreductase chain 4 (mt:ND4) of Drosophila yakuba (Fruit fly).